Here is a 444-residue protein sequence, read N- to C-terminus: MAEFFPEIPKIQFEGKESTNPLAFRFYDPNEVIDGKPLKDHLKFSVAFWHTFVNEGRDPFGDPTAERPWNRFSDPMDKAFARVDALFEFCEKLNIEYFCFHDRDIAPEGKTLRETNKILDKVVERIKERMKDSNVKLLWGTANLFSHPRYMHGAATTCSADVFAYAAAQVKKALEITKELGGEGYVFWGGREGYETLLNTDLGLELENLARFLRMAVEYAKKIGFTGQFLIEPKPKEPTKHQYDFDVATAYAFLKNHGLDEYFKFNIEANHATLAGHTFQHELRMARILGKLGSIDANQGDLLLGWDTDQFPTNIYDTTLAMYEVIKAGGFTKGGLNFDAKVRRASYKVEDLFIGHIAGMDTFALGFKIAYKLAKDGVFDKFIEEKYRSFKEGIGKEIVEGKTDFEKLEEYIIDKEDIELPSGKQEYLESLLNSYIVKTIAELR.

Active-site residues include His-101 and Asp-104. 7 residues coordinate Mg(2+): Glu-232, Glu-268, His-271, Asp-296, Asp-307, Asp-309, and Asp-339.

The protein belongs to the xylose isomerase family. As to quaternary structure, homotetramer. It depends on Mg(2+) as a cofactor.

It localises to the cytoplasm. The enzyme catalyses alpha-D-xylose = alpha-D-xylulofuranose. In Thermotoga maritima (strain ATCC 43589 / DSM 3109 / JCM 10099 / NBRC 100826 / MSB8), this protein is Xylose isomerase.